A 345-amino-acid polypeptide reads, in one-letter code: MTVIVPIHGPAPALAPAPERVGVLLVNLGTPDSCDTKGVRVYLREFLSDPRVIENQGIFWKLALNGIILNTRPARKAKDYQKIWNQEKNESPLKTITRAQAEKLAASLSDRSHLVVDWAMRYGNPSMRDRIEALVAQGCSRLLVVPLYPQYSAATSATVCDQAFRVLRELRAQPTLRVTPPYYRDDAYIDALANSIHAHLATLPFKPEMIVASFHGMPQAYIEKGDPYQSQCVATVDALRERMGLDDKKLLLTFQSRFGFDQWLQPYTDKTIEKLAKDGVRKLAVVMPGFAADCLETLEEIAQENAEIFMHNGGEEFSAIPCLNDSADGIAVIRQLVMRELEGWL.

Fe cation-binding residues include His-215 and Glu-296.

It belongs to the ferrochelatase family.

It localises to the cytoplasm. It catalyses the reaction heme b + 2 H(+) = protoporphyrin IX + Fe(2+). The protein operates within porphyrin-containing compound metabolism; protoheme biosynthesis; protoheme from protoporphyrin-IX: step 1/1. Catalyzes the ferrous insertion into protoporphyrin IX. The polypeptide is Ferrochelatase (Rhodopseudomonas palustris (strain HaA2)).